The chain runs to 542 residues: Homeobox protein ceh-18 (542 aa).

Residues 243–252 show a composition bias toward polar residues; sequence NTPTQPTASL. A disordered region spans residues 243–264; sequence NTPTQPTASLTPKKAENRPPVV. One can recognise a POU-specific domain in the interval 290–364; it reads DDRIDMNELE…LLKEWLADVE (75 aa). The segment at residues 421–480 is a DNA-binding region (homeobox); it reads RRRKRTNLDMNQRNALDTFFALNPRPDHDKMTDIANSLELDRDVVRVWFCNRRQKMRRVD. Residues 514–542 form a disordered region; that stretch reads LASCQASNDDSDGTSGSPDAPSNDGCSDL. A compositionally biased stretch (polar residues) spans 517–530; sequence CQASNDDSDGTSGS.

It belongs to the POU transcription factor family. In terms of assembly, interacts with akir-1. In terms of tissue distribution, expressed in the gonadal sheath cells that signal the oocyte, but not in the oocyte.

The protein resides in the nucleus. Its function is as follows. Directs gonadal sheath cell differentiation and function. Also directs gonad migration and plays a role in specifying the differentiated phenotypes of epidermal cells during postembryonic development. Plays a role in oogenesis, regulating a sheath cell signal that causes oocytes to maintain diakinesis arrest during meiosis. Negatively regulates oocyte maturation, ovulation and MAPK activation in oocytes when sperm are not available for fertilization. May be recruited by akir-1 to the promoter regions of antimicrobial peptide genes to control gene expression in response to fungal infection. The polypeptide is Homeobox protein ceh-18 (Caenorhabditis elegans).